The sequence spans 524 residues: Serine/threonine-protein phosphatase 2A 56 kDa regulatory subunit gamma isoform (524 aa).

M1 carries the N-acetylmethionine modification. The segment at 476–508 (SDEARQAQKELKKDRPLVRRKSELPQDPHTEKA) is disordered.

The protein belongs to the phosphatase 2A regulatory subunit B56 family. As to quaternary structure, PP2A consists of a common heterodimeric core enzyme, composed of PPP2CA a 36 kDa catalytic subunit (subunit C) and PPP2R1A a 65 kDa constant regulatory subunit (PR65 or subunit A), that associates with a variety of regulatory subunits. Proteins that associate with the core dimer include three families of regulatory subunits B (the R2/B/PR55/B55, R3/B''/PR72/PR130/PR59 and R5/B'/B56 families), the 48 kDa variable regulatory subunit, viral proteins, and cell signaling molecules. Interacts with SGO1. Interacts with SGO1; the interaction is direct. May interact with TP53. Interacts with IER3 and/or ERK kinases; regulates ERK dephosphorylation. Interacts with CIP2A; this interaction stabilizes CIP2A. As to expression, highest levels in heart, liver and brain. Lower levels in skeletal muscle, spleen, kidney and lung. Isoform 4 is testis-specific.

The protein localises to the nucleus. It is found in the chromosome. It localises to the centromere. In terms of biological role, the B regulatory subunit might modulate substrate selectivity and catalytic activity, and might also direct the localization of the catalytic enzyme to a particular subcellular compartment. The PP2A-PPP2R5C holoenzyme may activate TP53 and play a role in DNA damage-induced inhibition of cell proliferation. PP2A-PPP2R5C may also regulate the ERK signaling pathway through ERK dephosphorylation. This Mus musculus (Mouse) protein is Serine/threonine-protein phosphatase 2A 56 kDa regulatory subunit gamma isoform (Ppp2r5c).